The sequence spans 426 residues: Glutamate-1-semialdehyde 2,1-aminomutase (426 aa).

Lys-265 is subject to N6-(pyridoxal phosphate)lysine.

It belongs to the class-III pyridoxal-phosphate-dependent aminotransferase family. HemL subfamily. In terms of assembly, homodimer. It depends on pyridoxal 5'-phosphate as a cofactor.

Its subcellular location is the cytoplasm. It carries out the reaction (S)-4-amino-5-oxopentanoate = 5-aminolevulinate. It participates in porphyrin-containing compound metabolism; protoporphyrin-IX biosynthesis; 5-aminolevulinate from L-glutamyl-tRNA(Glu): step 2/2. In Yersinia pestis bv. Antiqua (strain Antiqua), this protein is Glutamate-1-semialdehyde 2,1-aminomutase.